Here is a 416-residue protein sequence, read N- to C-terminus: Gamma-glutamyl phosphate reductase (416 aa).

Belongs to the gamma-glutamyl phosphate reductase family.

It is found in the cytoplasm. The enzyme catalyses L-glutamate 5-semialdehyde + phosphate + NADP(+) = L-glutamyl 5-phosphate + NADPH + H(+). It participates in amino-acid biosynthesis; L-proline biosynthesis; L-glutamate 5-semialdehyde from L-glutamate: step 2/2. Functionally, catalyzes the NADPH-dependent reduction of L-glutamate 5-phosphate into L-glutamate 5-semialdehyde and phosphate. The product spontaneously undergoes cyclization to form 1-pyrroline-5-carboxylate. The sequence is that of Gamma-glutamyl phosphate reductase from Vibrio vulnificus (strain CMCP6).